The chain runs to 89 residues: Large ribosomal subunit protein bL27 (89 aa).

Positions 1–22 are disordered; it reads MAHTKKGGSSRNGRDSESKRLG.

It belongs to the bacterial ribosomal protein bL27 family.

This chain is Large ribosomal subunit protein bL27, found in Brucella melitensis biotype 1 (strain ATCC 23456 / CCUG 17765 / NCTC 10094 / 16M).